Here is a 1675-residue protein sequence, read N- to C-terminus: Clathrin heavy chain 1 (1675 aa).

A2 is modified (N-acetylalanine). A globular terminal domain region spans residues 2–479 (AQILPIRFQE…VDPTLALSVY (478 aa)). WD40-like repeat stretches follow at residues 24-67 (NIGF…RPIS), 68-107 (ADSAIMNPASKVIALKAGKTLQIFNIEMKSKMKAHTMTDD), 108-149 (VTFW…SSLA), 150-195 (GCQI…QPIE), 196-257 (GHAA…PEAQ), 258-301 (NDFP…ISGE), and 302-330 (TIFVTAPHEATAGIIGVNRKGQVLSVCVE). S67 bears the Phosphoserine mark. A Phosphothreonine modification is found at T105. Y184 is subject to Phosphotyrosine. A Phosphothreonine modification is found at T394. Residues 449–465 (EKWLKEDKLECSEELGD) are binding site for the uncoating ATPase, involved in lattice disassembly. The tract at residues 480 to 523 (LRANVPNKVIQCFAETGQVQKIVLYAKKVGYTPDWIFLLRNVMR) is flexible linker. Residues 524 to 634 (ISPDQGQQFA…RALEHFTDLY (111 aa)) form a distal segment region. Residues 524-1675 (ISPDQGQQFA…QPQPGFGYSM (1152 aa)) are heavy chain arm. 7 CHCR repeats span residues 537–683 (VQDE…QICV), 686–828 (ASKY…SEDV), 833–972 (ILVV…PLID), 979–1124 (LSET…VKEA), 1128–1269 (YIKA…FRLA), 1274–1420 (LHIV…LLLN), and 1423–1566 (LMVL…RECF). The residue at position 634 (Y634) is a Phosphotyrosine. A proximal segment region spans residues 639 to 1675 (AVVHTHLLNP…QPQPGFGYSM (1037 aa)). The residue at position 737 (K737) is an N6-succinyllysine. K856 is subject to N6-acetyllysine. Y899 carries the phosphotyrosine modification. A Phosphoserine modification is found at S1167. Y1206 bears the Phosphotyrosine mark. The segment at 1213-1522 (AAKLLYNNVS…YLFKGNNRWK (310 aa)) is involved in binding clathrin light chain. Position 1229 is a phosphoserine (S1229). K1441 is subject to N6-acetyllysine; alternate. K1441 carries the post-translational modification N6-succinyllysine; alternate. Phosphotyrosine is present on residues Y1477 and Y1487. S1494 bears the Phosphoserine mark. K1501 is modified (N6-acetyllysine). Residues 1550–1675 (AEELLQWFLQ…QPQPGFGYSM (126 aa)) are trimerization.

Belongs to the clathrin heavy chain family. Clathrin triskelions, composed of 3 heavy chains and 3 light chains, are the basic subunits of the clathrin coat. In the presence of light chains, hub assembly is influenced by both the pH and the concentration of calcium. Interacts with HIP1. Interacts with DENND1A, DENND1B and DENND1C. Interacts with ERBB2. Interacts with FKBP6. Interacts with OCRL. Interacts with CKAP5 and TACC3 forming the TACC3/ch-TOG/clathrin complex located at spindle inter-microtubules bridges; the complex implicates clathrin triskelions; TACC3 and CLTC are proposed to form a composite microtubule interaction surface. Plays a role in early autophagosome formation. Interacts with ATG16L1 (via N-terminus). Interacts with RFTN1; the interaction occurs in response to pathogens. Interacts with USP2 isoform 2. Interacts with TMEM106B (via N-terminus). Interacts with DNAJC6; this interaction produces a local change in heavy-chain contacts, creating a detectable global distortion of the clathrin coat and leads to the recruitment of HSPA8.

It is found in the cytoplasmic vesicle membrane. The protein resides in the membrane. It localises to the coated pit. Its subcellular location is the melanosome. The protein localises to the cytoplasm. It is found in the cytoskeleton. The protein resides in the spindle. Clathrin is the major protein of the polyhedral coat of coated pits and vesicles. Two different adapter protein complexes link the clathrin lattice either to the plasma membrane or to the trans-Golgi network. Acts as a component of the TACC3/ch-TOG/clathrin complex proposed to contribute to stabilization of kinetochore fibers of the mitotic spindle by acting as inter-microtubule bridge. The TACC3/ch-TOG/clathrin complex is required for the maintenance of kinetochore fiber tension. Plays a role in early autophagosome formation. Interaction with DNAJC6 mediates the recruitment of HSPA8 to the clathrin lattice and creates local destabilization of the lattice promoting uncoating. The protein is Clathrin heavy chain 1 of Mus musculus (Mouse).